Consider the following 265-residue polypeptide: MTRIRFTAAYDGRPYLGWQSQPGGRTVQDVLERAFSGLFGTTCRIHGSGRTDAGVHALGQVFHADAPDTHRIPADKWPAALNTRLPRTIRITHAEYVPPGFHARFSATGKTYRYCISRAPILNPFDAGLAWHRPLAWSVDILEQAVHLFRGTHDFTAFAALRGNEPRPIPEGYFRRTITQTQVAQTGEHVFITFTGTGFLYKMVRLMTGAAHEAARGKITLEELARLINAPLPDDKSPFCAPPDGLTLMRVHYPEETFGDKKKIN.

The active-site Nucleophile is D52. Y112 is a substrate binding site.

Belongs to the tRNA pseudouridine synthase TruA family. Homodimer.

The catalysed reaction is uridine(38/39/40) in tRNA = pseudouridine(38/39/40) in tRNA. In terms of biological role, formation of pseudouridine at positions 38, 39 and 40 in the anticodon stem and loop of transfer RNAs. The protein is tRNA pseudouridine synthase A of Akkermansia muciniphila (strain ATCC BAA-835 / DSM 22959 / JCM 33894 / BCRC 81048 / CCUG 64013 / CIP 107961 / Muc).